A 432-amino-acid polypeptide reads, in one-letter code: D-amino acid dehydrogenase (432 aa).

Residue Val3–Trp17 coordinates FAD.

This sequence belongs to the DadA oxidoreductase family. Requires FAD as cofactor.

It carries out the reaction a D-alpha-amino acid + A + H2O = a 2-oxocarboxylate + AH2 + NH4(+). The protein operates within amino-acid degradation; D-alanine degradation; NH(3) and pyruvate from D-alanine: step 1/1. Oxidative deamination of D-amino acids. The polypeptide is D-amino acid dehydrogenase (Shigella boydii serotype 18 (strain CDC 3083-94 / BS512)).